Reading from the N-terminus, the 441-residue chain is Cytochrome P450 monooxygenase cpsC (441 aa).

The disordered stretch occupies residues 175–195 (STTSQARKDETTATQQAGMEQ). Over residues 186–195 (TATQQAGMEQ) the composition is skewed to polar residues. Cysteine 377 contacts heme.

It belongs to the cytochrome P450 family. The cofactor is heme.

The catalysed reaction is campesine D + reduced [NADPH--hemoprotein reductase] + O2 = campesine G + oxidized [NADPH--hemoprotein reductase] + 2 H2O + H(+). The protein operates within alkaloid biosynthesis. In terms of biological role, cytochrome P450 monooxygenase; part of the gene cluster that mediates the biosynthesis of campesine G, a dimeric indole piperazine alkaloid that shows good insecticidal activity Galleria mellonella. Within the pathway, cpsC catalyzes regioselective dehydrogenation reaction towards C2-N1 of the (2H)-indole ring of campesine D to yield the final product, campesine G. The non-canonical non-ribosomal peptide synthetase cpsA catalyzes the first steps of the pathway by producing L-tryptophanal and L-valinal from their respective amino-acids. These products condensate spontaneously to form trypyl-valyl pyrazine also known as didehydrocampesine A. The NmrA-like family domain-containing oxidoreductase cpsB is the next enzyme in cps pathway and reduces the unstable didehydrocampesine A to campesine A. The methyltransferase cpsF and the acetyltransferase cpsE both recognize N13 of piperazine ring to carry out methylation and acetylation of campesine A to produce campesine C and B, respectively. The cytochrome P450 monooxygenase cpsD then acts as a dimerase that catalyzes oxidative heterocoupling between campesine B and C to produce heterodimers with unexpected 6/5/6/6/6/6/5/6 eight-ring scaffold called campesine D. Finally,the cytochrome P450 monooxygenase cpsC is a regioselective dehydrogenase that catalyzes dehydrogenation reaction towards C2-N1 to produce campesine G. This chain is Cytochrome P450 monooxygenase cpsC, found in Aspergillus campestris (strain IBT 28561).